The sequence spans 345 residues: N-acetyl-gamma-glutamyl-phosphate reductase (345 aa).

Cysteine 149 is an active-site residue.

The protein belongs to the NAGSA dehydrogenase family. Type 1 subfamily.

It is found in the cytoplasm. The catalysed reaction is N-acetyl-L-glutamate 5-semialdehyde + phosphate + NADP(+) = N-acetyl-L-glutamyl 5-phosphate + NADPH + H(+). It participates in amino-acid biosynthesis; L-arginine biosynthesis; N(2)-acetyl-L-ornithine from L-glutamate: step 3/4. Catalyzes the NADPH-dependent reduction of N-acetyl-5-glutamyl phosphate to yield N-acetyl-L-glutamate 5-semialdehyde. This is N-acetyl-gamma-glutamyl-phosphate reductase from Bacillus cereus (strain AH187).